Consider the following 287-residue polypeptide: Orotidine 5'-phosphate decarboxylase (287 aa).

Lysine 95 serves as the catalytic Proton donor.

Belongs to the OMP decarboxylase family. Type 2 subfamily.

The catalysed reaction is orotidine 5'-phosphate + H(+) = UMP + CO2. The protein operates within pyrimidine metabolism; UMP biosynthesis via de novo pathway; UMP from orotate: step 2/2. This chain is Orotidine 5'-phosphate decarboxylase, found in Albidiferax ferrireducens (strain ATCC BAA-621 / DSM 15236 / T118) (Rhodoferax ferrireducens).